The following is a 234-amino-acid chain: Peptidyl-tRNA hydrolase (234 aa).

Tyr14 lines the tRNA pocket. His19 serves as the catalytic Proton acceptor. TRNA contacts are provided by Phe64, Asn66, and Asn112. The tract at residues 187 to 234 (TGTKADEEKPKPAKSHIHQARNGVQPKKLPETGPMAEMLKKMFGPKKD) is disordered.

It belongs to the PTH family. Monomer.

Its subcellular location is the cytoplasm. It carries out the reaction an N-acyl-L-alpha-aminoacyl-tRNA + H2O = an N-acyl-L-amino acid + a tRNA + H(+). Its function is as follows. Hydrolyzes ribosome-free peptidyl-tRNAs (with 1 or more amino acids incorporated), which drop off the ribosome during protein synthesis, or as a result of ribosome stalling. In terms of biological role, catalyzes the release of premature peptidyl moieties from peptidyl-tRNA molecules trapped in stalled 50S ribosomal subunits, and thus maintains levels of free tRNAs and 50S ribosomes. The polypeptide is Peptidyl-tRNA hydrolase (Allorhizobium ampelinum (strain ATCC BAA-846 / DSM 112012 / S4) (Agrobacterium vitis (strain S4))).